A 640-amino-acid polypeptide reads, in one-letter code: ETV5-related protein Ets96B (640 aa).

The tract at residues 315–375 is disordered; sequence HADSTTTAAQ…HHGHQQAEQQ (61 aa). Residues 321–356 are a coiled coil; the sequence is TAAQQQQQQQEQQQQQQQQQQQQQHQQQLQQAAALH. Low complexity predominate over residues 322–355; the sequence is AAQQQQQQQEQQQQQQQQQQQQQHQQQLQQAAAL. The segment covering 356 to 369 has biased composition (basic residues); it reads HPHHHHSHHGHHGH. Residues 498–579 constitute a DNA-binding region (ETS); that stretch reads LQLWQFLVAL…NGERYVYRFV (82 aa). Polar residues predominate over residues 609-624; sequence LAKTPPTSGDSQTQSP. The disordered stretch occupies residues 609–628; the sequence is LAKTPPTSGDSQTQSPRVAK.

The protein belongs to the ETS family. In terms of tissue distribution, in the adult brain, expressed almost exclusively in dopaminergic neurons.

The protein localises to the nucleus. Required in dopaminergic neurons to regulate expression of genes involved in dopamine signaling. Decreases expression of the dopamine transporter DAT and increases expression of the dopamine transporter Vmat and the tyrosine 3-monooxygenase ple which is involved in dopamine biosynthesis. Also involved in negatively regulating the expression of a group of endoplasmic reticulum proteins, the molecular chaperone Calr and the protein disulfide isomerases CaBP1 and ERp60. The chain is ETV5-related protein Ets96B from Drosophila melanogaster (Fruit fly).